A 135-amino-acid chain; its full sequence is Protein cornichon homolog 1 (135 aa).

3 helical membrane passes run 2–22, 51–71, and 111–131; these read VFVW…VIYQ, FVLQ…AMFL, and IVGL…TVLL.

This sequence belongs to the cornichon family. As to quaternary structure, interacts with HKT1;3.

It localises to the endoplasmic reticulum membrane. It is found in the golgi apparatus membrane. Functionally, acts as a cargo receptor necessary for the transportation of the cation transporter HKT1;3 and possibly other secretory proteins from the endoplasmic reticulum (ER) in COPII-coated vesicles targeted to the Golgi apparatus. This chain is Protein cornichon homolog 1, found in Oryza sativa subsp. japonica (Rice).